The primary structure comprises 192 residues: T-cell surface glycoprotein CD3 epsilon chain (192 aa).

The N-terminal stretch at 1-21 is a signal peptide; it reads MQTGNLWQVLGLCLLLVGAWA. The Extracellular segment spans residues 22 to 111; sequence QDDTEQNPYE…RVCKNCMEVN (90 aa). One can recognise an Ig-like domain in the interval 27-98; the sequence is QNPYEVSISG…GNTEAAHTLY (72 aa). Cys-43 and Cys-84 are joined by a disulfide. A helical membrane pass occupies residues 112–137; sequence LLEVATIIVVDICVTLGLLLLVYYWS. At 138–192 the chain is on the cytoplasmic side; sequence KSRKAKATPMTRGAGAGGRPRGQNRERPPPVPNPDYEPIRKGQRDLYSGLNQRGV. A disordered region spans residues 146–192; that stretch reads PMTRGAGAGGRPRGQNRERPPPVPNPDYEPIRKGQRDLYSGLNQRGV. Residues 160–177 are NUMB-binding region; the sequence is QNRERPPPVPNPDYEPIR. Positions 163–190 constitute an ITAM domain; that stretch reads ERPPPVPNPDYEPIRKGQRDLYSGLNQR. Positions 164 to 171 are proline-rich sequence; that stretch reads RPPPVPNP. Phosphotyrosine is present on residues Tyr-173 and Tyr-184.

The TCR-CD3 complex is composed of a CD3D/CD3E and a CD3G/CD3E heterodimers that preferentially associate with TCRalpha and TCRbeta, respectively, to form TCRalpha/CD3E/CD3G and TCRbeta/CD3G/CD3E trimers. In turn, the hexamer interacts with CD3Z homodimer to form the TCR-CD3 complex. Alternatively, TCRalpha and TCRbeta can be replaced by TCRgamma and TCRdelta. Interacts with CD6. Interacts (via Proline-rich sequence) with NCK1; the interaction is ligand dependent but independent of tyrosine kinase activation. Post-translationally, phosphorylated on Tyr residues after T-cell receptor triggering by LCK in association with CD4/CD8.

The protein resides in the cell membrane. Part of the TCR-CD3 complex present on T-lymphocyte cell surface that plays an essential role in adaptive immune response. When antigen presenting cells (APCs) activate T-cell receptor (TCR), TCR-mediated signals are transmitted across the cell membrane by the CD3 chains CD3D, CD3E, CD3G and CD3Z. All CD3 chains contain immunoreceptor tyrosine-based activation motifs (ITAMs) in their cytoplasmic domain. Upon TCR engagement, these motifs become phosphorylated by Src family protein tyrosine kinases LCK and FYN, resulting in the activation of downstream signaling pathways. In addition of this role of signal transduction in T-cell activation, CD3E plays an essential role in correct T-cell development. Also participates in internalization and cell surface down-regulation of TCR-CD3 complexes via endocytosis sequences present in CD3E cytosolic region. In addition to its role as a TCR coreceptor, it serves as a receptor for ITPRIPL1. Ligand recognition inhibits T-cell activation by promoting interaction with NCK1, which prevents CD3E-ZAP70 interaction and blocks the ERK-NFkB signaling cascade and calcium influx. In Ovis aries (Sheep), this protein is T-cell surface glycoprotein CD3 epsilon chain (CD3E).